The chain runs to 481 residues: Glucan endo-1,3-beta-glucosidase 8 (481 aa).

Residues 1–33 form the signal peptide; it reads MSNLLALVVGFVIVIGHLGILVNGLGVNWGTMA. Residues Asn-99 and Asn-110 are each glycosylated (N-linked (GlcNAc...) asparagine). The active-site Proton donor is the Glu-119. 2 N-linked (GlcNAc...) asparagine glycosylation sites follow: Asn-126 and Asn-131. Glu-265 acts as the Nucleophile in catalysis. The cysteines at positions 367 and 428 are disulfide-linked. 2 N-linked (GlcNAc...) asparagine glycosylation sites follow: Asn-409 and Asn-440. Ser-455 carries GPI-anchor amidated serine lipidation. Positions 456–481 are cleaved as a propeptide — removed in mature form; that stretch reads SASSFSCSSYSLVVLIVWFLLSGMMF.

This sequence belongs to the glycosyl hydrolase 17 family. Post-translationally, contains two additional disulfide bonds.

It is found in the secreted. The protein resides in the cell wall. Its subcellular location is the cell membrane. It carries out the reaction Hydrolysis of (1-&gt;3)-beta-D-glucosidic linkages in (1-&gt;3)-beta-D-glucans.. The polypeptide is Glucan endo-1,3-beta-glucosidase 8 (Arabidopsis thaliana (Mouse-ear cress)).